Here is a 79-residue protein sequence, read N- to C-terminus: DNA-directed RNA polymerase subunit omega (79 aa).

The protein belongs to the RNA polymerase subunit omega family. In terms of assembly, the RNAP catalytic core consists of 2 alpha, 1 beta, 1 beta' and 1 omega subunit. When a sigma factor is associated with the core the holoenzyme is formed, which can initiate transcription.

The enzyme catalyses RNA(n) + a ribonucleoside 5'-triphosphate = RNA(n+1) + diphosphate. In terms of biological role, promotes RNA polymerase assembly. Latches the N- and C-terminal regions of the beta' subunit thereby facilitating its interaction with the beta and alpha subunits. This Thermotoga petrophila (strain ATCC BAA-488 / DSM 13995 / JCM 10881 / RKU-1) protein is DNA-directed RNA polymerase subunit omega.